The primary structure comprises 207 residues: Fibroblast growth factor 18 (207 aa).

Residues 1–27 (MYSAPSACTCLCLHFLLLCFQVQVLVA) form the signal peptide. N-linked (GlcNAc...) asparagine glycosylation occurs at Asn39. Residues Cys109 and Cys127 are joined by a disulfide bond. A glycan (N-linked (GlcNAc...) asparagine) is linked at Asn137. Residues 157 to 186 (GRPRKGPKTRENQQDVHFMKRYPKGQPELQ) form a disordered region. The span at 164–174 (KTRENQQDVHF) shows a compositional bias: basic and acidic residues.

Belongs to the heparin-binding growth factors family. As to quaternary structure, interacts with FGFR3 and FGFR4.

It is found in the secreted. Its function is as follows. Plays an important role in the regulation of cell proliferation, cell differentiation and cell migration. Required for normal ossification and bone development. Stimulates hepatic and intestinal proliferation. In Homo sapiens (Human), this protein is Fibroblast growth factor 18 (FGF18).